Reading from the N-terminus, the 449-residue chain is PC-esterase domain-containing protein 1A (449 aa).

Belongs to the PC-esterase family.

The polypeptide is PC-esterase domain-containing protein 1A (Pced1a) (Mus musculus (Mouse)).